Reading from the N-terminus, the 235-residue chain is Exotoxin type C (235 aa).

The first 27 residues, 1–27 (MKKINIIKIVFIITVILISTISPIIKS), serve as a signal peptide directing secretion. Zn(2+) contacts are provided by histidine 194, histidine 228, and aspartate 230.

The protein belongs to the staphylococcal/streptococcal toxin family.

Superantigen that acts as a causative agent of the symptoms associated with scarlet fever. Has been associated with streptococcal toxic shock-like disease and may play a role in the early events of rheumatic fever. Superantigens cross-link major histocompatibility complex (MHC) class II and T-cell receptor (TCR) molecules, resulting in an overstimulation of T-cells associated with a massive release of pyrogenic and inflammatory cytokines. This chain is Exotoxin type C (speC), found in Streptococcus pyogenes serotype M1.